Here is a 192-residue protein sequence, read N- to C-terminus: Orotate phosphoribosyltransferase (192 aa).

Residue 116-124 (EDIVTTGLS) coordinates 5-phospho-alpha-D-ribose 1-diphosphate. Orotate contacts are provided by Thr-120 and Arg-148.

Belongs to the purine/pyrimidine phosphoribosyltransferase family. PyrE subfamily. As to quaternary structure, homodimer. The cofactor is Mg(2+).

The catalysed reaction is orotidine 5'-phosphate + diphosphate = orotate + 5-phospho-alpha-D-ribose 1-diphosphate. The protein operates within pyrimidine metabolism; UMP biosynthesis via de novo pathway; UMP from orotate: step 1/2. In terms of biological role, catalyzes the transfer of a ribosyl phosphate group from 5-phosphoribose 1-diphosphate to orotate, leading to the formation of orotidine monophosphate (OMP). In Brucella abortus (strain S19), this protein is Orotate phosphoribosyltransferase.